The primary structure comprises 949 residues: Valine--tRNA ligase (949 aa).

Residues 45–55 (PNVTGVLHMGH) carry the 'HIGH' region motif. Residues 561–565 (KMSKS) carry the 'KMSKS' region motif. Lys564 is an ATP binding site. Positions 882–949 (EELLKQEKTR…EIKEKLMTLP (68 aa)) form a coiled coil.

This sequence belongs to the class-I aminoacyl-tRNA synthetase family. ValS type 1 subfamily. In terms of assembly, monomer.

Its subcellular location is the cytoplasm. The enzyme catalyses tRNA(Val) + L-valine + ATP = L-valyl-tRNA(Val) + AMP + diphosphate. Catalyzes the attachment of valine to tRNA(Val). As ValRS can inadvertently accommodate and process structurally similar amino acids such as threonine, to avoid such errors, it has a 'posttransfer' editing activity that hydrolyzes mischarged Thr-tRNA(Val) in a tRNA-dependent manner. This Protochlamydia amoebophila (strain UWE25) protein is Valine--tRNA ligase.